The following is a 519-amino-acid chain: Spermidine/putrescine import ATP-binding protein PotA (519 aa).

An ABC transporter domain is found at 6 to 401; that stretch reads LHLRDITKIY…PNSLWVANFI (396 aa). Position 39 to 46 (39 to 46) interacts with ATP; the sequence is GPSGCGKT. Residues 107–270 are insert; the sequence is RKPKDNVDQS…EQFENKNITR (164 aa).

It belongs to the ABC transporter superfamily. Spermidine/putrescine importer (TC 3.A.1.11.1) family. The complex is composed of two ATP-binding proteins (PotA), two transmembrane proteins (PotB and PotC) and a solute-binding protein (PotD).

The protein resides in the cell membrane. It carries out the reaction ATP + H2O + polyamine-[polyamine-binding protein]Side 1 = ADP + phosphate + polyamineSide 2 + [polyamine-binding protein]Side 1.. Its function is as follows. Part of the ABC transporter complex PotABCD involved in spermidine/putrescine import. Responsible for energy coupling to the transport system. The polypeptide is Spermidine/putrescine import ATP-binding protein PotA (Ureaplasma parvum serovar 3 (strain ATCC 700970)).